A 286-amino-acid chain; its full sequence is L-cysteine S-thiosulfotransferase subunit SoxA (286 aa).

A signal peptide spans 1–28; that stretch reads MKKTIQRGLFTGALVLLTAMTSKPAHAA. Cysteine 106 and cysteine 137 form a disulfide bridge. The Cytochrome c domain maps to 180 to 286; sequence DAYMKGKEMF…LKFNGPASRK (107 aa). Cysteine 200 and histidine 204 together coordinate heme. Arginine 243 is a substrate binding site. Residue cysteine 247 participates in heme binding. The active-site Cysteine persulfide intermediate is cysteine 247.

It belongs to the SoxA family. Heterodimer of SoxA and SoxX. The SoxAX complex interacts with CT1020, SoxAX-binding protein SaxB (SoxK); this interaction stimulates catalytic activity of the complex. Heme is required as a cofactor. Cysteine persulfide at Cys-247.

Its subcellular location is the periplasm. The catalysed reaction is L-cysteinyl-[SoxY protein] + thiosulfate + 2 Fe(III)-[cytochrome c] = S-sulfosulfanyl-L-cysteinyl-[SoxY protein] + 2 Fe(II)-[cytochrome c] + 2 H(+). It carries out the reaction S-sulfanyl-L-cysteinyl-[SoxY protein] + thiosulfate + 2 Fe(III)-[cytochrome c] = S-(2-sulfodisulfanyl)-L-cysteinyl-[SoxY protein] + 2 Fe(II)-[cytochrome c] + 2 H(+). In terms of biological role, C-type monoheme cytochrome, which is part of the SoxAX cytochrome complex involved in sulfur oxidation. The SoxAX complex catalyzes the formation of a heterodisulfide bond between the conserved cysteine residue on a sulfur carrier SoxYZ complex subunit SoxY and thiosulfate or other inorganic sulfur substrates. This leads to the liberation of two electrons, which may be transferred from the SoxAX complex to another cytochrome c and which then may be used for reductive CO(2) fixation. In Chlorobaculum thiosulfatiphilum (Chlorobium limicola f.sp. thiosulfatophilum), this protein is L-cysteine S-thiosulfotransferase subunit SoxA.